Here is a 420-residue protein sequence, read N- to C-terminus: Serine--tRNA ligase (420 aa).

225–227 (TLE) contacts L-serine. Position 256 to 258 (256 to 258 (RQE)) interacts with ATP. L-serine is bound at residue E279. ATP is bound at residue 343 to 346 (EVSS). T379 serves as a coordination point for L-serine.

Belongs to the class-II aminoacyl-tRNA synthetase family. Type-1 seryl-tRNA synthetase subfamily. In terms of assembly, homodimer. The tRNA molecule binds across the dimer.

It is found in the cytoplasm. The catalysed reaction is tRNA(Ser) + L-serine + ATP = L-seryl-tRNA(Ser) + AMP + diphosphate + H(+). The enzyme catalyses tRNA(Sec) + L-serine + ATP = L-seryl-tRNA(Sec) + AMP + diphosphate + H(+). It functions in the pathway aminoacyl-tRNA biosynthesis; selenocysteinyl-tRNA(Sec) biosynthesis; L-seryl-tRNA(Sec) from L-serine and tRNA(Sec): step 1/1. Catalyzes the attachment of serine to tRNA(Ser). Is also able to aminoacylate tRNA(Sec) with serine, to form the misacylated tRNA L-seryl-tRNA(Sec), which will be further converted into selenocysteinyl-tRNA(Sec). In Mycoplasma pneumoniae (strain ATCC 29342 / M129 / Subtype 1) (Mycoplasmoides pneumoniae), this protein is Serine--tRNA ligase.